Here is a 149-residue protein sequence, read N- to C-terminus: Alpha-crystallin A chain (149 aa).

The sHSP domain occupies 41–149 (LFRSVLESGI…DASHGERPIP (109 aa)). Positions 89, 91, 96, and 143 each coordinate Zn(2+).

It belongs to the small heat shock protein (HSP20) family. Heteropolymer composed of three CRYAA and one CRYAB subunits. Inter-subunit bridging via zinc ions enhances stability, which is crucial as there is no protein turn over in the lens. Can also form homodimers and homotetramers (dimers of dimers) which serve as the building blocks of homooligomers. Within homooligomers, the zinc-binding motif is created from residues of 3 different molecules. His-89 and Glu-91 from one molecule are ligands of the zinc ion, and His-96 and His-143 residues from additional molecules complete the site with tetrahedral coordination geometry. Part of a complex required for lens intermediate filament formation composed of BFSP1, BFSP2 and CRYAA.

The protein resides in the cytoplasm. It is found in the nucleus. Functionally, contributes to the transparency and refractive index of the lens. May act as a chaperone, preventing aggregation of various proteins under a wide range of stress conditions. The polypeptide is Alpha-crystallin A chain (CRYAA) (Columba livia (Rock dove)).